Consider the following 338-residue polypeptide: Dihydroorotate dehydrogenase (quinone) (338 aa).

Residues 59 to 63 (AGLDK) and Thr83 contribute to the FMN site. Lys63 is a binding site for substrate. Residue 108–112 (NRMGF) coordinates substrate. FMN is bound by residues Asn136 and Asn169. Asn169 is a substrate binding site. Ser172 acts as the Nucleophile in catalysis. Asn174 provides a ligand contact to substrate. 2 residues coordinate FMN: Lys214 and Thr242. 243–244 (NT) serves as a coordination point for substrate. FMN-binding positions include Gly265, Gly294, and 315–316 (YS).

Belongs to the dihydroorotate dehydrogenase family. Type 2 subfamily. In terms of assembly, monomer. Requires FMN as cofactor.

The protein resides in the cell membrane. The catalysed reaction is (S)-dihydroorotate + a quinone = orotate + a quinol. It participates in pyrimidine metabolism; UMP biosynthesis via de novo pathway; orotate from (S)-dihydroorotate (quinone route): step 1/1. Catalyzes the conversion of dihydroorotate to orotate with quinone as electron acceptor. This Azoarcus sp. (strain BH72) protein is Dihydroorotate dehydrogenase (quinone).